The sequence spans 456 residues: 3-isopropylmalate dehydratase large subunit (456 aa).

[4Fe-4S] cluster-binding residues include Cys336, Cys396, and Cys399.

It belongs to the aconitase/IPM isomerase family. LeuC type 1 subfamily. As to quaternary structure, heterodimer of LeuC and LeuD. The cofactor is [4Fe-4S] cluster.

The catalysed reaction is (2R,3S)-3-isopropylmalate = (2S)-2-isopropylmalate. It participates in amino-acid biosynthesis; L-leucine biosynthesis; L-leucine from 3-methyl-2-oxobutanoate: step 2/4. Functionally, catalyzes the isomerization between 2-isopropylmalate and 3-isopropylmalate, via the formation of 2-isopropylmaleate. In Staphylococcus aureus (strain MW2), this protein is 3-isopropylmalate dehydratase large subunit.